The chain runs to 604 residues: UvrABC system protein C (604 aa).

A GIY-YIG domain is found at 14–91 (ESPGVYRMLD…IKEQRPPYNI (78 aa)). Residues 202–237 (EQVTAQLTRDMETASQALDFEEAARLRDQIQQLRRL) enclose the UVR domain. The segment at 538-557 (GHRQQRDKQRRTSTLQDIPG) is disordered.

It belongs to the UvrC family. Interacts with UvrB in an incision complex.

The protein resides in the cytoplasm. Its function is as follows. The UvrABC repair system catalyzes the recognition and processing of DNA lesions. UvrC both incises the 5' and 3' sides of the lesion. The N-terminal half is responsible for the 3' incision and the C-terminal half is responsible for the 5' incision. The protein is UvrABC system protein C of Chromohalobacter salexigens (strain ATCC BAA-138 / DSM 3043 / CIP 106854 / NCIMB 13768 / 1H11).